Reading from the N-terminus, the 183-residue chain is Large ribosomal subunit protein uL22 (183 aa).

Positions 163-183 (KTAAKKQSAKKLKKQKMMYRE) are disordered. Over residues 165-183 (AAKKQSAKKLKKQKMMYRE) the composition is skewed to basic residues.

This sequence belongs to the universal ribosomal protein uL22 family.

This Pectinaria gouldii (Trumpet worm) protein is Large ribosomal subunit protein uL22 (rpl-17).